The chain runs to 152 residues: Aspartate 1-decarboxylase (152 aa).

Ser24 functions as the Schiff-base intermediate with substrate; via pyruvic acid in the catalytic mechanism. Position 24 is a pyruvic acid (Ser) (Ser24). Thr56 is a substrate binding site. Tyr57 (proton donor) is an active-site residue. Residue 72-74 participates in substrate binding; it reads GAA.

Belongs to the PanD family. In terms of assembly, heterooctamer of four alpha and four beta subunits. Pyruvate is required as a cofactor. In terms of processing, is synthesized initially as an inactive proenzyme, which is activated by self-cleavage at a specific serine bond to produce a beta-subunit with a hydroxyl group at its C-terminus and an alpha-subunit with a pyruvoyl group at its N-terminus.

It localises to the cytoplasm. It catalyses the reaction L-aspartate + H(+) = beta-alanine + CO2. The protein operates within cofactor biosynthesis; (R)-pantothenate biosynthesis; beta-alanine from L-aspartate: step 1/1. Functionally, catalyzes the pyruvoyl-dependent decarboxylation of aspartate to produce beta-alanine. The chain is Aspartate 1-decarboxylase from Methylobacterium nodulans (strain LMG 21967 / CNCM I-2342 / ORS 2060).